A 134-amino-acid polypeptide reads, in one-letter code: Large ribosomal subunit protein uL22 (134 aa).

This sequence belongs to the universal ribosomal protein uL22 family. As to quaternary structure, part of the 50S ribosomal subunit.

In terms of biological role, this protein binds specifically to 23S rRNA; its binding is stimulated by other ribosomal proteins, e.g. L4, L17, and L20. It is important during the early stages of 50S assembly. It makes multiple contacts with different domains of the 23S rRNA in the assembled 50S subunit and ribosome. Its function is as follows. The globular domain of the protein is located near the polypeptide exit tunnel on the outside of the subunit, while an extended beta-hairpin is found that lines the wall of the exit tunnel in the center of the 70S ribosome. The polypeptide is Large ribosomal subunit protein uL22 (Porphyromonas gingivalis (strain ATCC 33277 / DSM 20709 / CIP 103683 / JCM 12257 / NCTC 11834 / 2561)).